The chain runs to 890 residues: Leucine--tRNA ligase (890 aa).

A 'HIGH' region motif is present at residues 48-58; the sequence is PYPSGKLHMGH. The 'KMSKS' region signature appears at 645–649; it reads KMSKS. An ATP-binding site is contributed by K648.

Belongs to the class-I aminoacyl-tRNA synthetase family.

The protein resides in the cytoplasm. It catalyses the reaction tRNA(Leu) + L-leucine + ATP = L-leucyl-tRNA(Leu) + AMP + diphosphate. This Polynucleobacter asymbioticus (strain DSM 18221 / CIP 109841 / QLW-P1DMWA-1) (Polynucleobacter necessarius subsp. asymbioticus) protein is Leucine--tRNA ligase.